The chain runs to 306 residues: Non-specific ribonucleoside hydrolase RihC (306 aa).

His-235 is an active-site residue.

Belongs to the IUNH family. RihC subfamily.

In terms of biological role, hydrolyzes both purine and pyrimidine ribonucleosides with a broad-substrate specificity. This chain is Non-specific ribonucleoside hydrolase RihC, found in Salmonella dublin (strain CT_02021853).